The sequence spans 403 residues: Large ribosomal subunit protein uL3 (403 aa).

Residues 1 to 37 (MSHRKFSAPRHGSLGFLPRKRSSRHRGKVKSFPKDDP) are disordered. Ser13 is subject to Phosphoserine. The segment covering 18-31 (PRKRSSRHRGKVKS) has biased composition (basic residues). Residue Lys39 forms a Glycyl lysine isopeptide (Lys-Gly) (interchain with G-Cter in SUMO2) linkage. N6-acetyllysine is present on Lys136. Residues Lys224 and Lys226 each participate in a glycyl lysine isopeptide (Lys-Gly) (interchain with G-Cter in SUMO2) cross-link. His245 is subject to Tele-methylhistidine. Lys286 and Lys294 each carry N6-acetyllysine; alternate. Lys286 is covalently cross-linked (Glycyl lysine isopeptide (Lys-Gly) (interchain with G-Cter in SUMO2); alternate). A Glycyl lysine isopeptide (Lys-Gly) (interchain with G-Cter in SUMO1); alternate cross-link involves residue Lys294. Residue Ser304 is modified to Phosphoserine. Lys366 is subject to N6-acetyllysine; alternate. Lys366 participates in a covalent cross-link: Glycyl lysine isopeptide (Lys-Gly) (interchain with G-Cter in SUMO2); alternate. Lys373 carries the post-translational modification N6-acetyllysine. Residues Lys386, Lys393, and Lys399 each participate in a glycyl lysine isopeptide (Lys-Gly) (interchain with G-Cter in SUMO2) cross-link.

Belongs to the universal ribosomal protein uL3 family. As to quaternary structure, component of the large ribosomal subunit. Interacts with DHX33. In terms of processing, constitutively monomethylated at His-245 by METTL18. Methylation at His-245 regulates translation elongation by slowing ribosome traversal on tyrosine codons: slower elongation provides enough time for proper folding of synthesized proteins and prevents cellular aggregation of tyrosine-rich proteins. It is not required for incorporation of RPL3 into ribosomes.

Its subcellular location is the nucleus. It is found in the nucleolus. The protein localises to the cytoplasm. Functionally, component of the large ribosomal subunit. The ribosome is a large ribonucleoprotein complex responsible for the synthesis of proteins in the cell. The chain is Large ribosomal subunit protein uL3 (Rpl3) from Rattus norvegicus (Rat).